A 278-amino-acid polypeptide reads, in one-letter code: Octanoyl-[GcvH]:protein N-octanoyltransferase (278 aa).

Positions 44 to 249 (SQSPPTLRAW…TLQQHGASLL (206 aa)) constitute a BPL/LPL catalytic domain. Cys-148 (acyl-thioester intermediate) is an active-site residue.

It belongs to the octanoyltransferase LipL family.

The catalysed reaction is N(6)-octanoyl-L-lysyl-[glycine-cleavage complex H protein] + L-lysyl-[lipoyl-carrier protein] = N(6)-octanoyl-L-lysyl-[lipoyl-carrier protein] + L-lysyl-[glycine-cleavage complex H protein]. It participates in protein modification; protein lipoylation via endogenous pathway; protein N(6)-(lipoyl)lysine from octanoyl-[acyl-carrier-protein]. Catalyzes the amidotransfer (transamidation) of the octanoyl moiety from octanoyl-GcvH to the lipoyl domain of the E2 subunit of lipoate-dependent enzymes. The chain is Octanoyl-[GcvH]:protein N-octanoyltransferase from Halalkalibacterium halodurans (strain ATCC BAA-125 / DSM 18197 / FERM 7344 / JCM 9153 / C-125) (Bacillus halodurans).